A 496-amino-acid polypeptide reads, in one-letter code: Cobyric acid synthase (496 aa).

The 189-residue stretch at 256 to 444 folds into the GATase cobBQ-type domain; the sequence is KINIAVVLLR…IHGILDNQAF (189 aa). The active-site Nucleophile is the cysteine 337. Histidine 436 is an active-site residue.

The protein belongs to the CobB/CobQ family. CobQ subfamily.

The protein operates within cofactor biosynthesis; adenosylcobalamin biosynthesis. In terms of biological role, catalyzes amidations at positions B, D, E, and G on adenosylcobyrinic A,C-diamide. NH(2) groups are provided by glutamine, and one molecule of ATP is hydrogenolyzed for each amidation. The sequence is that of Cobyric acid synthase from Phocaeicola vulgatus (strain ATCC 8482 / DSM 1447 / JCM 5826 / CCUG 4940 / NBRC 14291 / NCTC 11154) (Bacteroides vulgatus).